A 276-amino-acid chain; its full sequence is Rhomboid protease GlpG (276 aa).

Helical transmembrane passes span 94–114, 142–162, 168–188, 193–213, 229–249, and 250–270; these read AGPLTLSVMVVTIAVFILMQI, ALLHFSLLHILFNLMWWWYLG, VLGTGKLLVIALVSALVSGWA, SGTYFGGLSGVVYALMGYVWL, LMAFALLWLVAGYFDILGMSI, and ANAAHVAGLIVGLLMAFWDTY. The active-site Nucleophile is the Ser-201. The active site involves His-254.

This sequence belongs to the peptidase S54 family.

The protein resides in the cell inner membrane. It carries out the reaction Cleaves type-1 transmembrane domains using a catalytic dyad composed of serine and histidine that are contributed by different transmembrane domains.. Its function is as follows. Rhomboid-type serine protease that catalyzes intramembrane proteolysis. This Pectobacterium atrosepticum (strain SCRI 1043 / ATCC BAA-672) (Erwinia carotovora subsp. atroseptica) protein is Rhomboid protease GlpG.